The sequence spans 440 residues: Kinetochore protein NUF2 homolog (440 aa).

2 coiled-coil regions span residues 142–239 (LGLL…LRSQ) and 299–386 (INEQ…RQTN).

It belongs to the NUF2 family. In terms of assembly, component of the NDC80 complex, which consists of NDC80, NUF2, SPC24 and SPC25.

The protein resides in the chromosome. It localises to the centromere. In terms of biological role, acts as a component of the essential kinetochore-associated NDC80 complex, which is required for chromosome segregation and spindle checkpoint activity to ensure proper cell division. The protein is Kinetochore protein NUF2 homolog of Arabidopsis thaliana (Mouse-ear cress).